The primary structure comprises 537 residues: DNA-directed primase/polymerase protein (537 aa).

A coiled-coil region spans residues 1 to 22; sequence MLRKWEARVKQIEERASHYERK. Residues Arg-76, 114 to 116, 165 to 169, 270 to 273, and Lys-279 each bind substrate; these read DLE, KFSRH, and RNFR. Positions 114 and 116 each coordinate Mn(2+). The Zn(2+) site is built by Cys-401, His-408, Cys-428, and Cys-433. The Zinc knuckle motif signature appears at 401-434; that stretch reads CENIGRAHKSNNIMILVDLKNEVWYQKCHDPVCK. The tract at residues 462-481 is disordered; it reads SGETDDTSTSLTKDSQTPPS. Residues 462 to 536 are interaction with RPA1; sequence SGETDDTSTS…DELIIEALQN (75 aa). The segment covering 468–478 has biased composition (low complexity); sequence TSTSLTKDSQT. 2 consecutive short sequence motifs (RPA1-binding motif) follow at residues 494–507 and 524–532; these read WDDE…EATE and DIPDELIIE.

It belongs to the eukaryotic-type primase small subunit family. As to quaternary structure, interacts with RPA1; leading to recruitment to chromatin and stimulate DNA primase activity. Interacts with SSBP1. Interacts with POLDIP2; leading to enhance DNA polymerase activity. It depends on Mn(2+) as a cofactor.

It localises to the nucleus. The protein resides in the mitochondrion matrix. Its subcellular location is the chromosome. The enzyme catalyses ssDNA + n NTP = ssDNA/pppN(pN)n-1 hybrid + (n-1) diphosphate.. It catalyses the reaction DNA(n) + a 2'-deoxyribonucleoside 5'-triphosphate = DNA(n+1) + diphosphate. Functionally, DNA primase and DNA polymerase required to tolerate replication-stalling lesions by bypassing them. Required to facilitate mitochondrial and nuclear replication fork progression by initiating de novo DNA synthesis using dNTPs and acting as an error-prone DNA polymerase able to bypass certain DNA lesions. Shows a high capacity to tolerate DNA damage lesions such as 8oxoG and abasic sites in DNA. Provides different translesion synthesis alternatives when DNA replication is stalled: able to synthesize DNA primers downstream of lesions, such as ultraviolet (UV) lesions, R-loops and G-quadruplexes, to allow DNA replication to continue. Can also realign primers ahead of 'unreadable lesions' such as abasic sites and 6-4 photoproduct (6-4 pyrimidine-pyrimidinone), thereby skipping the lesion. Repriming avoids fork degradation while leading to accumulation of internal ssDNA gaps behind the forks. Also able to incorporate nucleotides opposite DNA lesions such as 8oxoG, like a regular translesion synthesis DNA polymerase. Also required for reinitiating stalled forks after UV damage during nuclear DNA replication. Required for mitochondrial DNA (mtDNA) synthesis and replication, by reinitiating synthesis after UV damage or in the presence of chain-terminating nucleotides. Prevents APOBEC family-mediated DNA mutagenesis by repriming downstream of abasic site to prohibit error-prone translesion synthesis. Has non-overlapping function with POLH. In addition to its role in DNA damage response, also required to maintain efficient nuclear and mitochondrial DNA replication in unperturbed cells. The chain is DNA-directed primase/polymerase protein from Mus musculus (Mouse).